Reading from the N-terminus, the 404-residue chain is Cysteine desulfurase IscS (404 aa).

Residues Ala75–Thr76, Asn155, Gln183, and Ser203–His205 each bind pyridoxal 5'-phosphate. Lys206 carries the post-translational modification N6-(pyridoxal phosphate)lysine. Residue Thr243 participates in pyridoxal 5'-phosphate binding. The Cysteine persulfide intermediate role is filled by Cys328. Residue Cys328 coordinates [2Fe-2S] cluster.

This sequence belongs to the class-V pyridoxal-phosphate-dependent aminotransferase family. NifS/IscS subfamily. In terms of assembly, homodimer. Forms a heterotetramer with IscU, interacts with other sulfur acceptors. Requires pyridoxal 5'-phosphate as cofactor.

It is found in the cytoplasm. The catalysed reaction is (sulfur carrier)-H + L-cysteine = (sulfur carrier)-SH + L-alanine. It participates in cofactor biosynthesis; iron-sulfur cluster biosynthesis. Master enzyme that delivers sulfur to a number of partners involved in Fe-S cluster assembly, tRNA modification or cofactor biosynthesis. Catalyzes the removal of elemental sulfur atoms from cysteine to produce alanine. Functions as a sulfur delivery protein for Fe-S cluster synthesis onto IscU, an Fe-S scaffold assembly protein, as well as other S acceptor proteins. The polypeptide is Cysteine desulfurase IscS (Pseudomonas putida (strain W619)).